The primary structure comprises 385 residues: Histidinol-phosphate aminotransferase (385 aa).

At Lys235 the chain carries N6-(pyridoxal phosphate)lysine.

This sequence belongs to the class-II pyridoxal-phosphate-dependent aminotransferase family. Histidinol-phosphate aminotransferase subfamily. As to quaternary structure, homodimer. Pyridoxal 5'-phosphate is required as a cofactor.

It carries out the reaction L-histidinol phosphate + 2-oxoglutarate = 3-(imidazol-4-yl)-2-oxopropyl phosphate + L-glutamate. The protein operates within amino-acid biosynthesis; L-histidine biosynthesis; L-histidine from 5-phospho-alpha-D-ribose 1-diphosphate: step 7/9. This is Histidinol-phosphate aminotransferase from Nocardia farcinica (strain IFM 10152).